A 181-amino-acid polypeptide reads, in one-letter code: ATP synthase subunit b (181 aa).

A helical membrane pass occupies residues 24 to 44; the sequence is LFPNLPNFIAHLLATIVLVIV.

It belongs to the ATPase B chain family. As to quaternary structure, F-type ATPases have 2 components, F(1) - the catalytic core - and F(0) - the membrane proton channel. F(1) has five subunits: alpha(3), beta(3), gamma(1), delta(1), epsilon(1). F(0) has three main subunits: a(1), b(2) and c(10-14). The alpha and beta chains form an alternating ring which encloses part of the gamma chain. F(1) is attached to F(0) by a central stalk formed by the gamma and epsilon chains, while a peripheral stalk is formed by the delta and b chains.

Its subcellular location is the cell membrane. Its function is as follows. F(1)F(0) ATP synthase produces ATP from ADP in the presence of a proton or sodium gradient. F-type ATPases consist of two structural domains, F(1) containing the extramembraneous catalytic core and F(0) containing the membrane proton channel, linked together by a central stalk and a peripheral stalk. During catalysis, ATP synthesis in the catalytic domain of F(1) is coupled via a rotary mechanism of the central stalk subunits to proton translocation. Functionally, component of the F(0) channel, it forms part of the peripheral stalk, linking F(1) to F(0). This is ATP synthase subunit b from Mycoplasma capricolum subsp. capricolum (strain California kid / ATCC 27343 / NCTC 10154).